Consider the following 409-residue polypeptide: FAD-dependent monooxygenase phnB (409 aa).

4 residues coordinate FAD: E35, A50, R110, and D311.

It belongs to the paxM FAD-dependent monooxygenase family. FAD serves as cofactor.

It catalyses the reaction 3,6,7,9-tetrahydroxy-3-methyl-2,3-dihydro-1H-naphtho[2,1-b]pyran-1-one + NADPH + O2 + H(+) = 2,3,4,7,9-pentahydroxy-6-methyl-1H-phenalen-1-one + NADP(+) + 2 H2O. It functions in the pathway secondary metabolite biosynthesis. In terms of biological role, FAD-dependent monooxygenase; part of the gene cluster that mediates the biosynthesis of phenalenones such as herqueinone, compounds that have been reported to treat tumors, bacterial infections and/or mycoses, and rheumatic diseases. The non-reducing polyketide synthase phnA synthesizes the heptaketide backbone and cyclizes it into the angular, hemiketal-containing naphtho-gamma-pyrone prephenalenone. The product template (PT) domain of phnA catalyzes only the C4-C9 aldol condensation, which is unprecedented among known PT domains. The transformation of prephenalenone to phenalenones requires an FAD-dependent monooxygenase phnB, which catalyzes the C2 aromatic hydroxylation of prephenalenone and ring opening of the gamma-pyrone ring simultaneously. Subsequent intramolecular deprotonation of C3 phenolic oxygen accelerates phenalenone ring closure to yield the tricyclic phenalenone core with a C2 hydroxylation. The prenyltransferase phnF further catalyzes reverse C-prenylation of phenalenone by direct electrophilic substitution at C6, or possibly via first a forward O-prenylation of a neighboring phenol in phenalenone, followed by a Claisen rearrangement. The hydroalkoxylation enzyme phnH catalyzes the 5-exo-trig cyclization via acid catalysis after the spontaneous deprotonation of 7-OH, which leads to the formation of the dihydrobenzofuran atrovenetin. Atrovenetin is further converted to deoxyherqueinone by the O-methyltransferase phnC which can methylate C2-OH to stabilize the northern portion of the phenalenone core. Finally, the oxidoreductase phnG converts deoxyherqueinone to herqueinone via C6 hydroxylation. This Penicillium herquei protein is FAD-dependent monooxygenase phnB.